The chain runs to 472 residues: Proline--tRNA ligase (472 aa).

It belongs to the class-II aminoacyl-tRNA synthetase family. ProS type 3 subfamily. In terms of assembly, homodimer.

It localises to the cytoplasm. The enzyme catalyses tRNA(Pro) + L-proline + ATP = L-prolyl-tRNA(Pro) + AMP + diphosphate. Its function is as follows. Catalyzes the attachment of proline to tRNA(Pro) in a two-step reaction: proline is first activated by ATP to form Pro-AMP and then transferred to the acceptor end of tRNA(Pro). The protein is Proline--tRNA ligase of Ureaplasma urealyticum serovar 10 (strain ATCC 33699 / Western).